A 209-amino-acid polypeptide reads, in one-letter code: Large ribosomal subunit protein uL3 (209 aa).

Positions 119–145 (AIKRHGQSRGPMSHGSHFHRAPGSVGM) are disordered.

The protein belongs to the universal ribosomal protein uL3 family. Part of the 50S ribosomal subunit. Forms a cluster with proteins L14 and L19.

Its function is as follows. One of the primary rRNA binding proteins, it binds directly near the 3'-end of the 23S rRNA, where it nucleates assembly of the 50S subunit. The chain is Large ribosomal subunit protein uL3 from Staphylococcus aureus (strain COL).